Here is a 160-residue protein sequence, read N- to C-terminus: NADH-quinone oxidoreductase subunit B (160 aa).

4 residues coordinate [4Fe-4S] cluster: Cys37, Cys38, Cys102, and Cys132.

It belongs to the complex I 20 kDa subunit family. NDH-1 is composed of 14 different subunits. Subunits NuoB, C, D, E, F, and G constitute the peripheral sector of the complex. The cofactor is [4Fe-4S] cluster.

It localises to the cell inner membrane. It carries out the reaction a quinone + NADH + 5 H(+)(in) = a quinol + NAD(+) + 4 H(+)(out). Its function is as follows. NDH-1 shuttles electrons from NADH, via FMN and iron-sulfur (Fe-S) centers, to quinones in the respiratory chain. Couples the redox reaction to proton translocation (for every two electrons transferred, four hydrogen ions are translocated across the cytoplasmic membrane), and thus conserves the redox energy in a proton gradient. The chain is NADH-quinone oxidoreductase subunit B from Neisseria meningitidis serogroup A / serotype 4A (strain DSM 15465 / Z2491).